The primary structure comprises 400 residues: MKIVLAYSGGLDTSIILKWLKETYRAEVIAFTADIGQGEEVEEAREKALRTGASKAIALDLKEEFVRDFVFPMMRAGAVYEGYYLLGTSIARPLIAKHLVRIAEEEGAEAIAHGATGKGNDQVRFELTAYALKPDIKVIAPWREWSFQGRKEMIAYAEAHGIPVPVTQEKPYSMDANLLHISYEGGVLEDPWAEPPKGMFRMTQDPEEAPDAPEYVEVEFFEGDPVAVNGERLSPAALLQRLNEIGGRHGVGRVDIVENRFVGMKSRGVYETPGGTILYHARRAVESLTLDREVLHQRDMLSPKYAELVYYGFWYAPEREALQAYFDHVARSVTGVARLKLYKGNVYVVGRKAPKSLYRQDLVSFDEAGGYDQKDAEGFIKIQALRLRVRALVEREGHGA.

Residues 6–14 (AYSGGLDTS) and Ala33 each bind ATP. L-citrulline contacts are provided by Tyr84 and Ser89. Gly114 is an ATP binding site. The L-aspartate site is built by Thr116, Asn120, and Asp121. L-citrulline is bound at residue Asn120. Arg124, Ser173, Ser182, Glu258, and Tyr270 together coordinate L-citrulline.

This sequence belongs to the argininosuccinate synthase family. Type 1 subfamily. Homotetramer.

The protein localises to the cytoplasm. It carries out the reaction L-citrulline + L-aspartate + ATP = 2-(N(omega)-L-arginino)succinate + AMP + diphosphate + H(+). It functions in the pathway amino-acid biosynthesis; L-arginine biosynthesis; L-arginine from L-ornithine and carbamoyl phosphate: step 2/3. This chain is Argininosuccinate synthase, found in Thermus thermophilus (strain ATCC 27634 / DSM 579 / HB8).